Reading from the N-terminus, the 44-residue chain is Antimicrobial peptide 1b (44 aa).

The region spanning 1 to 42 (AQKCGEQGRGAKCPNCLCCGRYGFCGSTPDYCGVGCQSQCRG) is the Chitin-binding type-1 domain. Intrachain disulfides connect Cys-4–Cys-19, Cys-13–Cys-25, Cys-16–Cys-43, Cys-18–Cys-32, and Cys-36–Cys-40.

Post-translationally, contains 5 disulfide bonds.

Functionally, binds chitin. Has antifungal activity against F.oxysporum 16/10 (IC(50)=4.1 uM) and B.sorokiniana 6/10 (IC(50)=2.7 uM). Inhibits germination of fungal spores. This chain is Antimicrobial peptide 1b, found in Leymus arenarius (Lyme grass).